Consider the following 165-residue polypeptide: Large ribosomal subunit protein uL10 (165 aa).

The protein belongs to the universal ribosomal protein uL10 family. In terms of assembly, part of the ribosomal stalk of the 50S ribosomal subunit. The N-terminus interacts with L11 and the large rRNA to form the base of the stalk. The C-terminus forms an elongated spine to which L12 dimers bind in a sequential fashion forming a multimeric L10(L12)X complex.

Its function is as follows. Forms part of the ribosomal stalk, playing a central role in the interaction of the ribosome with GTP-bound translation factors. The sequence is that of Large ribosomal subunit protein uL10 from Shewanella pealeana (strain ATCC 700345 / ANG-SQ1).